Consider the following 303-residue polypeptide: Ribosomal protein L11 methyltransferase (303 aa).

Residues threonine 144, glycine 165, aspartate 187, and asparagine 235 each coordinate S-adenosyl-L-methionine.

This sequence belongs to the methyltransferase superfamily. PrmA family.

The protein localises to the cytoplasm. It carries out the reaction L-lysyl-[protein] + 3 S-adenosyl-L-methionine = N(6),N(6),N(6)-trimethyl-L-lysyl-[protein] + 3 S-adenosyl-L-homocysteine + 3 H(+). In terms of biological role, methylates ribosomal protein L11. The chain is Ribosomal protein L11 methyltransferase from Prochlorococcus marinus (strain MIT 9301).